Reading from the N-terminus, the 397-residue chain is Decapping and exoribonuclease protein (397 aa).

Substrate is bound by residues R58, E101, and 131-133; that span reads WRG. Position 192 (E192) interacts with Mg(2+). C217 and E234 together coordinate substrate. Residues E234, D236, E253, and L254 each contribute to the Mg(2+) site. Residues K255 and Q280 each coordinate substrate. A Phosphothreonine modification is found at T392. The residue at position 394 (S394) is a Phosphoserine.

The protein belongs to the DXO/Dom3Z family. Requires Mg(2+) as cofactor.

It localises to the nucleus. The catalysed reaction is a 5'-end triphospho-ribonucleoside in mRNA + H2O = a 5'-end phospho-ribonucleoside in mRNA + diphosphate + H(+). It catalyses the reaction a 5'-end NAD(+)-phospho-ribonucleoside in mRNA + H2O = a 5'-end phospho-ribonucleoside in mRNA + NAD(+) + H(+). The enzyme catalyses a 5'-end NAD(+)-phospho-ribonucleoside in snoRNA + H2O = a 5'-end phospho-ribonucleoside in snoRNA + NAD(+) + H(+). It carries out the reaction a 5'-end (N(7)-methyl 5'-triphosphoguanosine)-ribonucleoside-ribonucleotide in mRNA + H2O = a (N(7)-methyl 5'-triphosphoguanosine)-nucleoside + a 5'-end phospho-ribonucleoside in mRNA + H(+). The catalysed reaction is a 5'-end FAD-phospho-ribonucleoside in mRNA + H2O = a 5'-end phospho-ribonucleoside in mRNA + FAD + H(+). It catalyses the reaction a 5'-end CoA-ribonucleoside in mRNA + H2O = 3'-dephospho-CoA + a 5'-end phospho-ribonucleoside in mRNA + H(+). Its function is as follows. Decapping enzyme for NAD-capped RNAs: specifically hydrolyzes the nicotinamide adenine dinucleotide (NAD) cap from a subset of RNAs by removing the entire NAD moiety from the 5'-end of an NAD-capped RNA. The NAD-cap is present at the 5'-end of some RNAs and snoRNAs. In contrast to the canonical 5'-end N7 methylguanosine (m7G) cap, the NAD cap promotes mRNA decay. Preferentially acts on NAD-capped transcripts in response to environmental stress. Also acts as a non-canonical decapping enzyme that removes the entire cap structure of m7G capped or incompletely capped RNAs and mediates their subsequent degradation. Specifically degrades pre-mRNAs with a defective 5'-end m7G cap and is part of a pre-mRNA capping quality control. Has decapping activity toward incomplete 5'-end m7G cap mRNAs such as unmethylated 5'-end-capped RNA (cap0), while it has no activity toward 2'-O-ribose methylated m7G cap (cap1). In contrast to canonical decapping enzymes DCP2 and NUDT16, which cleave the cap within the triphosphate linkage, the decapping activity releases the entire cap structure GpppN and a 5'-end monophosphate RNA. Also has 5'-3' exoribonuclease activities: The 5'-end monophosphate RNA is then degraded by the 5'-3' exoribonuclease activity, enabling this enzyme to decap and degrade incompletely capped mRNAs. Also possesses RNA 5'-pyrophosphohydrolase activity by hydrolyzing the 5'-end triphosphate to release pyrophosphates. Exhibits decapping activity towards FAD-capped RNAs. Exhibits decapping activity towards dpCoA-capped RNAs in vitro. The polypeptide is Decapping and exoribonuclease protein (Rattus norvegicus (Rat)).